We begin with the raw amino-acid sequence, 189 residues long: Early E3 20.5 kDa glycoprotein (189 aa).

Residues asparagine 73 and asparagine 137 are each glycosylated (N-linked (GlcNAc...) asparagine; by host).

This sequence belongs to the adenoviridae E3_20 family.

Functionally, E3 proteins seem to be dispensable for virus growth in tissue culture cells. They are potentially important for virus growth under special conditions; E3 region may help adenoviruses to evade the immune surveillance of the host. This Homo sapiens (Human) protein is Early E3 20.5 kDa glycoprotein.